The primary structure comprises 463 residues: Putative WAS protein family homolog 3 (463 aa).

The segment at 1–54 (MTPVRMQHSLAGQTYAVPLIQPDLRREEAVQQMADALQYLQKVSGDIFSRISQQ) is required for WASH complex assembly. Positions 1–165 (MTPVRMQHSL…EGLGGLPSNI (165 aa)) are WHD1. A Glycyl lysine isopeptide (Lys-Gly) (interchain with G-Cter in ubiquitin) cross-link involves residue Lys218. Residues 295 to 463 (QDGVLTPPPP…AEEDEDDWES (169 aa)) form a disordered region. Over residues 300–312 (TPPPPPPPPPPAP) the composition is skewed to pro residues. Positions 347–463 (QGAPREVVDP…AEEDEDDWES (117 aa)) are VCA. The WH2 domain maps to 359–381 (GRATLLESIRQAGGIGKAKLRSM). A compositionally biased stretch (basic and acidic residues) spans 380–396 (SMKERKLEKKQQKEQEQ). Gly residues predominate over residues 422–434 (SGKGPGAGEGPGG). The span at 454 to 463 (AEEDEDDWES) shows a compositional bias: acidic residues.

It belongs to the WASH1 family. Component of the WASH core complex also described as WASH regulatory complex (SHRC) composed of WASH (WASHC1, WASH2P or WASH3P), WASHC2 (WASHC2A or WASHC2C), WASHC3, WASHC4 and WASHC5. The WASH core complex associates with the F-actin-capping protein dimer (formed by CAPZA1, CAPZA2 or CAPZA3 and CAPZB) in a transient or substoichiometric manner which was initially described as WASH complex. Interacts (via WHD1 region) with WASHC2C; the interaction is direct. Interacts with alpha-tubulin. Interacts with BECN1; WASHC1 and AMBRA1 can competitively interact with BECN1. Interacts with BLOC1S2; may associate with the BLOC-1 complex. Interacts with tubulin gamma chain (TUBG1 or TUBG2). Interacts with EXOC1, EXOC4, EXOC8; in MMP14-positive endosomes in breast tumor cells; indicative for an association with the exocyst complex.

The protein localises to the early endosome. The protein resides in the early endosome membrane. It localises to the recycling endosome membrane. Its subcellular location is the cell projection. It is found in the lamellipodium. The protein localises to the filopodium. The protein resides in the cytoplasmic vesicle. It localises to the autophagosome. Its subcellular location is the cytoplasm. It is found in the cytoskeleton. The protein localises to the microtubule organizing center. The protein resides in the centrosome. It localises to the centriole. In terms of biological role, acts as a nucleation-promoting factor at the surface of endosomes, where it recruits and activates the Arp2/3 complex to induce actin polymerization, playing a key role in the fission of tubules that serve as transport intermediates during endosome sorting. Involved in endocytic trafficking of EGF. Involved in transferrin receptor recycling. Regulates the trafficking of endosomal alpha5beta1 integrin to the plasma membrane and involved in invasive cell migration. In T-cells involved in endosome-to-membrane recycling of receptors including T-cell receptor (TCR), CD28 and ITGAL; proposed to be implicated in T cell proliferation and effector function. In dendritic cells involved in endosome-to-membrane recycling of major histocompatibility complex (MHC) class II probably involving retromer and subsequently allowing antigen sampling, loading and presentation during T-cell activation. Involved in Arp2/3 complex-dependent actin assembly driving Salmonella typhimurium invasion independent of ruffling. Involved in the exocytosis of MMP14 leading to matrix remodeling during invasive migration and implicating late endosome-to-plasma membrane tubular connections and cooperation with the exocyst complex. Involved in negative regulation of autophagy independently from its role in endosomal sorting by inhibiting BECN1 ubiquitination to inactivate PIK3C3/Vps34 activity. This Homo sapiens (Human) protein is Putative WAS protein family homolog 3 (WASH3P).